We begin with the raw amino-acid sequence, 281 residues long: Protein-S-isoprenylcysteine O-methyltransferase (281 aa).

The Cytoplasmic segment spans residues 1 to 2 (ML). Residues 3–29 (SPAGKISLQSFTGSSLVFFVICMFNHY) traverse the membrane as a helical segment. At 30–35 (YGITNL) the chain is on the lumenal side. The chain crosses the membrane as a helical span at residues 36 to 53 (VVNTLIVFFYAVNVYFFL). Topologically, residues 54 to 58 (KFFYN) are cytoplasmic. The helical transmembrane segment at 59 to 85 (EFAFAIAIRAAFLGLVLVLGLYIKLVA) threads the bilayer. At 86–88 (PPN) the chain is on the lumenal side. A helical membrane pass occupies residues 89–113 (IQIFGGYMSVMALFHYSEFLAIAIV). Residues 114 to 118 (QPKQV) are Cytoplasmic-facing. A helical membrane pass occupies residues 119-149 (STDSFVINHSPQYTIAAVSSWVEFFIETYFF). The Lumenal segment spans residues 150 to 155 (PGLKEI). Residues 156–181 (HWLSNIGLCVCILGEVLRKTAILTAG) form a helical membrane-spanning segment. Residues 182 to 208 (SNFNHLVQCEKSSDHVLVTHGVYAWFR) are Cytoplasmic-facing. Residues Gln189, 196–199 (HVLV), Tyr204, and 209–212 (HPSY) contribute to the S-adenosyl-L-methionine site. A helical transmembrane segment spans residues 209–226 (HPSYVGWFYWSIGTQIIL). Topologically, residues 227-229 (INP) are lumenal. A helical membrane pass occupies residues 230 to 243 (LCIPAYTLASWMFF). The Cytoplasmic portion of the chain corresponds to 244–281 (KERIYIEESMLLSFFGQQYCDYQQQVGTGIPFIEGYKI). Arg246 contacts substrate. S-adenosyl-L-methionine is bound at residue Glu250.

The protein belongs to the class VI-like SAM-binding methyltransferase superfamily. Isoprenylcysteine carboxyl methyltransferase family.

Its subcellular location is the endoplasmic reticulum membrane. It catalyses the reaction [protein]-C-terminal S-[(2E,6E)-farnesyl]-L-cysteine + S-adenosyl-L-methionine = [protein]-C-terminal S-[(2E,6E)-farnesyl]-L-cysteine methyl ester + S-adenosyl-L-homocysteine. Its function is as follows. Catalyzes the post-translational methylation of isoprenylated C-terminal cysteine residues. In Tribolium castaneum (Red flour beetle), this protein is Protein-S-isoprenylcysteine O-methyltransferase.